We begin with the raw amino-acid sequence, 353 residues long: T-complex protein 1 subunit eta (353 aa).

It belongs to the TCP-1 chaperonin family. Heterooligomeric complex of about 850 to 900 kDa that forms two stacked rings, 12 to 16 nm in diameter.

It is found in the cytoplasm. Its function is as follows. Molecular chaperone; assists the folding of proteins upon ATP hydrolysis. Known to play a role, in vitro, in the folding of actin and tubulin. The chain is T-complex protein 1 subunit eta from Tetrahymena thermophila.